The chain runs to 120 residues: MARSSFKLEHPLERRQAEANRIREKYPDRIPVIVEKAERSDIPDIDKKKYLVPADLTVGQFVYVVRKRIKLSAEKAIFIFVKNTLPPTAALMSAIYEENKDEDGFLYMTYSGENTFGLFV.

A disordered region spans residues 1 to 20; sequence MARSSFKLEHPLERRQAEAN. Gly-117 carries the Phosphatidylethanolamine amidated glycine lipid modification. Positions 118–120 are cleaved as a propeptide — removed in mature form; the sequence is LFV.

Belongs to the ATG8 family. As to quaternary structure, interacts with ATG4. In terms of processing, the C-terminal 3 residues are removed by ATG4 to expose Gly-117 at the C-terminus. The C-terminal Gly is then amidated with phosphatidylethanolamine by an activating system similar to that for ubiquitin.

The protein localises to the cytoplasmic vesicle. It localises to the autophagosome membrane. Its subcellular location is the vacuole membrane. The protein resides in the cytoplasm. It is found in the cytoskeleton. In terms of biological role, ubiquitin-like modifier involved in autophagosomes formation. May mediate the delivery of the autophagosomes to the vacuole via the microtubule cytoskeleton. In Oryza sativa subsp. indica (Rice), this protein is Autophagy-related protein 8C (ATG8C).